The following is a 201-amino-acid chain: Small ribosomal subunit protein uS4c (201 aa).

The segment at 20 to 43 is disordered; it reads GLTSKRPRAGSDLRNQSRSGKRSQ. The S4 RNA-binding domain maps to 89–149; sequence MRLDNILFRL…DEQKSRALIQ (61 aa).

This sequence belongs to the universal ribosomal protein uS4 family. Part of the 30S ribosomal subunit. Contacts protein S5. The interaction surface between S4 and S5 is involved in control of translational fidelity.

Its subcellular location is the plastid. The protein resides in the chloroplast. Its function is as follows. One of the primary rRNA binding proteins, it binds directly to 16S rRNA where it nucleates assembly of the body of the 30S subunit. In terms of biological role, with S5 and S12 plays an important role in translational accuracy. The sequence is that of Small ribosomal subunit protein uS4c (rps4) from Buxus microphylla (Littleleaf boxwood).